A 97-amino-acid chain; its full sequence is Co-chaperonin GroES (97 aa).

The protein belongs to the GroES chaperonin family. In terms of assembly, heptamer of 7 subunits arranged in a ring. Interacts with the chaperonin GroEL.

It is found in the cytoplasm. Functionally, together with the chaperonin GroEL, plays an essential role in assisting protein folding. The GroEL-GroES system forms a nano-cage that allows encapsulation of the non-native substrate proteins and provides a physical environment optimized to promote and accelerate protein folding. GroES binds to the apical surface of the GroEL ring, thereby capping the opening of the GroEL channel. This Wigglesworthia glossinidia brevipalpis protein is Co-chaperonin GroES.